A 224-amino-acid polypeptide reads, in one-letter code: Response regulator protein GraR (224 aa).

The region spanning 2–115 (QILLVEDDNT…VLIAKLQAIY (114 aa)) is the Response regulatory domain. Asp51 is subject to 4-aspartylphosphate. Residues 126-224 (KRTLSWQDAT…KVGKGYLAHE (99 aa)) constitute a DNA-binding region (ompR/PhoB-type).

Phosphorylated by GraS.

Its subcellular location is the cytoplasm. In terms of biological role, member of the two-component regulatory system GraR/GraS involved in resistance against cationic antimicrobial peptides (CAMPs). This chain is Response regulator protein GraR (graR), found in Staphylococcus epidermidis (strain ATCC 35984 / DSM 28319 / BCRC 17069 / CCUG 31568 / BM 3577 / RP62A).